The following is a 712-amino-acid chain: Polyribonucleotide nucleotidyltransferase (712 aa).

Mg(2+)-binding residues include D487 and D493. A KH domain is found at 554-613; sequence PKIITMTINPDKIRDVIGPSGKQINKIIEETGVKIDIEQDGTVFISSINQEMNDKAKKII. The region spanning 623–691 is the S1 motif domain; it reads GEIYEGKVKR…KQGRVNLSRK (69 aa).

Belongs to the polyribonucleotide nucleotidyltransferase family. Mg(2+) is required as a cofactor.

Its subcellular location is the cytoplasm. The catalysed reaction is RNA(n+1) + phosphate = RNA(n) + a ribonucleoside 5'-diphosphate. Its function is as follows. Involved in mRNA degradation. Catalyzes the phosphorolysis of single-stranded polyribonucleotides processively in the 3'- to 5'-direction. This is Polyribonucleotide nucleotidyltransferase from Bacillus cereus (strain G9842).